A 253-amino-acid polypeptide reads, in one-letter code: Phycoerythrobilin:ferredoxin oxidoreductase (253 aa).

This sequence belongs to the HY2 family.

The enzyme catalyses (3Z)-phycoerythrobilin + oxidized 2[4Fe-4S]-[ferredoxin] = 15,16-dihydrobiliverdin + reduced 2[4Fe-4S]-[ferredoxin] + 2 H(+). Its function is as follows. Catalyzes the two-electron reduction of the C2 and C3(1) diene system of 15,16-dihydrobiliverdin. This chain is Phycoerythrobilin:ferredoxin oxidoreductase, found in Prochlorococcus marinus (strain MIT 9301).